The primary structure comprises 1454 residues: Beta-1,3-glucan-binding protein (1454 aa).

The propeptide occupies 1–197; that stretch reads MSFDLTTPFD…KRSLEMRMMN (197 aa). Asn-33, Asn-55, Asn-185, Asn-571, Asn-592, Asn-825, Asn-882, and Asn-1153 each carry an N-linked (GlcNAc...) asparagine glycan.

The protein belongs to the glycosyl hydrolase 16 family. As to quaternary structure, monomer. As to expression, expressed in the hepatopancreas and secreted into the hemolymph. Expressed at lower levels in muscle, pleopod and gill tissue.

The protein localises to the secreted. In terms of biological role, involved in the recognition of invading microorganisms. Binds specifically to beta-1,3-glucan and activates the prophenoloxidase cascade. This chain is Beta-1,3-glucan-binding protein, found in Penaeus vannamei (Whiteleg shrimp).